We begin with the raw amino-acid sequence, 93 residues long: Protein salt-induced and EIN3/EIL1-dependent 1 (93 aa).

Residues Ser23 to Ser36 are compositionally biased toward low complexity. Residues Ser23–Ala46 form a disordered region.

Triggered by EIN3. In terms of biological role, involved in ethylene-dependent salt stress responses by reducing reactive oxygen species (ROS) accumulation. In Arabidopsis thaliana (Mouse-ear cress), this protein is Protein salt-induced and EIN3/EIL1-dependent 1.